The sequence spans 452 residues: MLSKKSRAVFLTAVASGTMLNPLNSSMISLALHSIQHEFHLSFTTVSWLISSFYLASAVAQPVTGKLGDLIGRKRLFLFGLILVAVSAIGAPFAPTFMTLLVMRLFQSVGSSAIYPSGVGLIRNHIHERQASALAVLSIFASAMTALGPTAGGFLIVWGGWPAIFIVNLPFIILSFLLGLYMFPKDQKKGAGIKTIIRQLDILGIVLFAGGIIFLLSFLLSFSTSPHAVEGVLGLLLLCAFVWRELKTDKPFIDVRLFKTQRNLSAVYVQFILLNVFFYCLFFGLPSYFQDEMHLSVQTSGLFMLFMSGMSIVVSPLTGKWIDRSGVVKPIFAGALLMTAGAVLLTIFFINVQTIGKGLILSLLGIGYGLGNVALQAAMLETSPSNMVGTTSGLFQTCRYLGSILSSVILGILFGKEITAAHFDMMGIIMIIAGGASLLMAVRFAALMKTAS.

Transmembrane regions (helical) follow at residues 8–28 (AVFL…SSMI), 39–59 (FHLS…ASAV), 77–97 (FLFG…APTF), 100–122 (LLVM…VGLI), 134–156 (LAVL…GFLI), 161–183 (WPAI…LYMF), 203–222 (LGIV…LLSF), 226–243 (PHAV…AFVW), 266–286 (AVYV…FGLP), 302–322 (LFML…GKWI), 330–350 (PIFA…IFFI), 359–379 (LILS…QAAM), 393–415 (GLFQ…ILFG), and 425–447 (MMGI…FAAL).

This sequence belongs to the major facilitator superfamily.

It is found in the cell membrane. This is an uncharacterized protein from Bacillus subtilis (strain 168).